Here is a 1919-residue protein sequence, read N- to C-terminus: Protein TIC 214 (1919 aa).

6 helical membrane-spanning segments follow: residues 18–38 (IINSVVVVGLYYGFLTTFSIG), 67–87 (FITGQLMMFISIYYAPLHLAL), 90–110 (PHTITVLALPYLLFHFFWNNH), 127–147 (LSIQCVFLNNLIFQLFNHFIL), 175–195 (VGWLIGHILFMKWVGLVLVWI), and 224–244 (IFSILLFITCVYYLGRIPSPI). Disordered regions lie at residues 250-375 (KETP…GKEK), 1107-1129 (IKSITKEKKKGTPGIKSSPNKRS), and 1606-1636 (ELKNRNQEEKEPADRGDLGSDAQNQGNRRFV). Acidic residues-rich tracts occupy residues 259–269 (GESEEETDVEI), 278–288 (GESEEETDVEI), 297–307 (GESEEETDVEI), 316–328 (GESEEETDVEIET), and 355–366 (EKEDPDKIDETE). Basic residues predominate over residues 1107–1117 (IKSITKEKKKG). Basic and acidic residues predominate over residues 1606–1623 (ELKNRNQEEKEPADRGDL). The segment covering 1626 to 1636 (DAQNQGNRRFV) has biased composition (polar residues).

This sequence belongs to the TIC214 family. As to quaternary structure, part of the Tic complex.

The protein localises to the plastid. The protein resides in the chloroplast inner membrane. Its function is as follows. Involved in protein precursor import into chloroplasts. May be part of an intermediate translocation complex acting as a protein-conducting channel at the inner envelope. This is Protein TIC 214 from Panax ginseng (Korean ginseng).